A 199-amino-acid polypeptide reads, in one-letter code: Rho-related protein racG (199 aa).

Positions 13, 15, 16, 17, 18, 32, and 35 each coordinate GTP. T17 lines the Mg(2+) pocket. 2 short sequence motifs (switch) span residues 26 to 37 (NAFPNEYIPTVF) and 57 to 75 (DTAG…YPST). A Mg(2+)-binding site is contributed by T35. Residues K116, D118, and A159 each contribute to the GTP site. C196 bears the Cysteine methyl ester mark. C196 carries S-geranylgeranyl cysteine lipidation. Positions 197–199 (SLF) are cleaved as a propeptide — removed in mature form.

It belongs to the small GTPase superfamily. Rho family. Requires Mg(2+) as cofactor.

The protein resides in the cell membrane. Its subcellular location is the cytoplasm. It localises to the cytoskeleton. The catalysed reaction is GTP + H2O = GDP + phosphate + H(+). Its activity is regulated as follows. Regulated by guanine nucleotide exchange factors (GEFs) which promote the exchange of bound GDP for free GTP, GTPase activating proteins (GAPs) which increase the GTP hydrolysis activity, and GDP dissociation inhibitors which inhibit the dissociation of the nucleotide from the GTPase. Small GTPase which cycles between active GTP-bound and inactive GDP-bound states. Involved in actin cytoskeleton remodeling during capping of surface receptors and uroid formation. In Entamoeba histolytica (strain ATCC 30459 / HM-1:IMSS / ABRM), this protein is Rho-related protein racG.